Reading from the N-terminus, the 501-residue chain is DELTA-alicitoxin-Pse2a (501 aa).

An N-terminal signal peptide occupies residues 1–22 (MSPYFKLSSALIFLAITMEALC). A propeptide spanning residues 23 to 35 (SPIENTSTSNKDN) is cleaved from the precursor. Residues 23–359 (SPIENTSTSN…GFLHFGCSYL (337 aa)) enclose the MACPF domain. Residues 135–159 (AAVTNNIASSEEEVQGLSLNLKAYS) are a coiled coil. Residues 388–422 (VCKVGPEGCQHHEDCHYRAAFWCECGGPYDLARTC) form the EGF-like domain. Cystine bridges form between C389-C402, C396-C410, and C412-C422.

It localises to the secreted. The protein resides in the nematocyst. In terms of biological role, causes lethal toxicity to the shrimp Palaemon paucidence, and hemolytic activity toward sheep red blood cells. In Phyllodiscus semoni (Night anemone), this protein is DELTA-alicitoxin-Pse2a.